A 193-amino-acid polypeptide reads, in one-letter code: Rho-related GTP-binding protein RhoA-A (193 aa).

Residues 12-19 (GDGACGKT), 30-37 (FPEVYVPT), 59-63 (DTAGQ), 117-120 (NKKD), and 160-162 (SAK) each bind GTP. (Microbial infection) O-linked (GlcNAc) tyrosine; by Yersinia Afp18 glycosylation occurs at Tyr-34. Residue Cys-190 is modified to Cysteine methyl ester. A lipid anchor (S-geranylgeranyl cysteine) is attached at Cys-190. A propeptide spans 191–193 (ALL) (removed in mature form).

The protein belongs to the small GTPase superfamily. Rho family. (Microbial infection) Glycosylated at Tyr-34 by Yersinia ruckeri toxin Afp18. Mono-O-GlcNAcylation by Afp18 inhibits RhoA activation by guanine nucleotide exchange factors and blocks RhoA signaling.

It is found in the cell membrane. In terms of biological role, regulates a signal transduction pathway linking plasma membrane receptors to the assembly of focal adhesions and actin stress fibers. In Danio rerio (Zebrafish), this protein is Rho-related GTP-binding protein RhoA-A.